A 321-amino-acid chain; its full sequence is tRNA(Ile)-lysidine synthase (321 aa).

21–26 (SYGSDS) is a binding site for ATP.

It belongs to the tRNA(Ile)-lysidine synthase family.

The protein localises to the cytoplasm. It catalyses the reaction cytidine(34) in tRNA(Ile2) + L-lysine + ATP = lysidine(34) in tRNA(Ile2) + AMP + diphosphate + H(+). Functionally, ligates lysine onto the cytidine present at position 34 of the AUA codon-specific tRNA(Ile) that contains the anticodon CAU, in an ATP-dependent manner. Cytidine is converted to lysidine, thus changing the amino acid specificity of the tRNA from methionine to isoleucine. The polypeptide is tRNA(Ile)-lysidine synthase (Campylobacter jejuni subsp. jejuni serotype O:2 (strain ATCC 700819 / NCTC 11168)).